We begin with the raw amino-acid sequence, 541 residues long: Synaptotagmin-1 (541 aa).

Residues 1–11 are Extracellular-facing; the sequence is MGFFSTILGFC. Residues 12-32 form a helical membrane-spanning segment; that stretch reads GFGVGISLGLVIGYVLFVYLL. The Cytoplasmic portion of the chain corresponds to 33 to 541; the sequence is PNDVKDPEIR…QIELEWRTAS (509 aa). In terms of domain architecture, SMP-LTD spans 67 to 249; it reads DFDRVDWINR…WPKTLVVPIL (183 aa). Positions 227 to 509 are phospholipid binding; the sequence is QEQIKDQVAN…TLGYVDIPVV (283 aa). C2 domains follow at residues 240 to 362 and 401 to 521; these read WPKT…AFTL and GFEE…NQKF. The Ca(2+) site is built by D276, D282, D332, and E334.

It belongs to the synaptotagmin family. As to quaternary structure, interacts with cabbage leaf curl virus (CaLCuV) BC1 protein and tobacco mosaic virus (TMV) MP protein. Interacts with ROSY1. Requires Ca(2+) as cofactor. Expressed in roots, shoots, rosette and cauline leaves, inflorescences, and siliques. In roots, expressed in vascular bundle, epidermis, the differential zone of the tips of root hairs, and the quiescent center and columella of root tips.

Its subcellular location is the cell membrane. It is found in the endosome membrane. Functionally, plays an important role in maintaining plasma membrane integrity during freezing and osmotic stresses. May function in membrane resealing during calcium-dependent freezing tolerance. May regulate endocytosis and endosome recycling at the plasma membrane and cell-to-cell trafficking of cabbage leaf curl virus (CaLCuV) and tobacco mosaic virus (TMV) movement proteins via plasmodesmata. This is Synaptotagmin-1 (SYT1) from Arabidopsis thaliana (Mouse-ear cress).